The chain runs to 457 residues: 11S globulin seed storage protein Ana o 2.0101 (457 aa).

The signal sequence occupies residues 1–14; the sequence is LSVCFLILFHGCLA. Residues 15 to 29 are igE-binding; sequence SRQEWQQQDECQIDR. Disulfide bonds link Cys-25/Cys-58 and Cys-101/Cys-278. 2 conformational epitope; mouse monoclonal antibody (mAb) 2B5-binding regions span residues 29–37 and 31–48; these read RLDALEPDN and DALE…TVEA. Residues 30 to 220 enclose the Cupin type-1 1 domain; that stretch reads LDALEPDNRV…AFQVDERLIK (191 aa). Binds goat polyclonal antibodies (pAbs) stretches follow at residues 32-45 and 55-86; these read ALEP…EAGT and QFRC…QLIY. A mouse monoclonal antibody (mAb) 2B5-binding region spans residues 34–57; it reads EPDNRVEYEAGTVEAWDPNHEQFR. The interval 41 to 55 is mouse monoclonal antibody (mAb) 4H9-binding; sequence YEAGTVEAWDPNHEQ. The igE-binding stretch occupies residues 105-119; the sequence is YQAPQQGRQQGQSGR. Residues 215 to 239 form a binds goat polyclonal antibodies (pAbs) region; the sequence is DERLIKQLKSEDNRGGIVKVKDDEL. The tract at residues 233-252 is CD4(+) T cell-reactive epitope; the sequence is KVKDDELRVIRPSRSQSERG. Residues 243–270 form a disordered region; that stretch reads RPSRSQSERGSESEEESEDEKRRWGQRD. Residues 261 to 270 show a composition bias toward basic and acidic residues; that stretch reads DEKRRWGQRD. The interval 265 to 289 is linear epitope; mouse monoclonal antibody (mAb) 1F5-binding; sequence RWGQRDNGIEETICTMRLKENINDP. An NGXEET; peptidase recognition motif motif is present at residues 271 to 276; that stretch reads NGIEET. A Cupin type-1 2 domain is found at 284–433; that stretch reads ENINDPARAD…AFQISREDAR (150 aa). 5 CD4(+) T cell-reactive epitope regions span residues 289 to 308, 297 to 316, 321 to 340, 329 to 348, and 377 to 396; these read PARA…LNSL, PEVG…LKWL, EKGV…LNSH, ALVL…GCKG, and QNFA…ISFK. Positions 395 to 416 are binds goat polyclonal antibodies (pAbs), but buried in the 3D-structure model; sequence FKTNDRAMTSPLAGRTSVLGGM.

This sequence belongs to the 11S seed storage protein (globulins) family. In terms of assembly, homotrimer. Hexamer. Each subunit is composed of an acidic and a basic chain derived from a single precursor and linked by a disulfide bond. In terms of processing, proteolytically processed from a single precursor to produce an acidic and a basic chain that are linked by a disulfide bond. Not glycosylated. As to expression, expressed in seed (at protein level). Expressed in the juice of the cashew apple (at protein level).

Its function is as follows. Seed storage protein. This Anacardium occidentale (Cashew) protein is 11S globulin seed storage protein Ana o 2.0101.